Here is a 687-residue protein sequence, read N- to C-terminus: MSKIRVYELAKELNVSSKDLITLLMDEFGVEVKNHMSAIEDEEAQLIKELLATKPEYVEGSLEDSKSLVDEYEEILQNELNKAKKKRKKNKREDKDDENEELETEVIEIGETITVKELAEKLNKPSNDVIRTLIFSGVMAAINQEIDFATAEKVCESYGVILEKLEVIEELEAVEVEEDDEENLEKRPPIVTVMGHVDHGKTSLLDAIRKAKVTDTEAGGITQHIGAYTININGEEITFLDTPGHEAFTAMRARGAQVTDVVILVVAADDGIMPQTKEAINHCKAAGVPMVVAINKIDKPGANPDRVKQELTEHGLVVEEWGGDTICEEVSAKSNLNIEKLLEMVLLTAEMLELKANKERKAKGTVIEAKLDKGRGPVATLLVQNGTLHVGDAIIVGSTYGRIRAMFDDTGKKIKSAGPSIPVEVLGLSEVPEAGDRFNQVKDEKTARIMADKRKDKEKSDSLMSGNRVSLEDLYSQIKEGKVKELGIIVKADVQGSVQAINQSLEKLSTDDVKVRVIHGGVGAITETDITLATASNAIVIGFNVRPDNNAVAQADKENVEIKTYRIIYDAIEDVKSAMIGMLEPEYKEVILGSAEVRETYKISNVGTIAGCYVLNGKLQRNAETRVIRDGIVIFESSLSSLKRFKDDVKEVNTGYECGLTVEKFNDVKEGDILECFMMEAIKRKEL.

Positions 186–355 (KRPPIVTVMG…LLTAEMLELK (170 aa)) constitute a tr-type G domain. The tract at residues 195-202 (GHVDHGKT) is G1. 195 to 202 (GHVDHGKT) serves as a coordination point for GTP. The interval 220–224 (GITQH) is G2. The G3 stretch occupies residues 241 to 244 (DTPG). GTP is bound by residues 241 to 245 (DTPGH) and 295 to 298 (NKID). The G4 stretch occupies residues 295 to 298 (NKID). Residues 331–333 (SAK) form a G5 region.

It belongs to the TRAFAC class translation factor GTPase superfamily. Classic translation factor GTPase family. IF-2 subfamily.

The protein resides in the cytoplasm. In terms of biological role, one of the essential components for the initiation of protein synthesis. Protects formylmethionyl-tRNA from spontaneous hydrolysis and promotes its binding to the 30S ribosomal subunits. Also involved in the hydrolysis of GTP during the formation of the 70S ribosomal complex. The sequence is that of Translation initiation factor IF-2 from Clostridium botulinum (strain Alaska E43 / Type E3).